The following is a 503-amino-acid chain: TGF-beta receptor type-1 (503 aa).

The first 29 residues, 1-29 (MEAAAAAPRRPQLLIVLVAAATLLPGAKA), serve as a signal peptide directing secretion. Residues 30 to 126 (LQCFCHLCTK…QSAGLGPVEL (97 aa)) are Extracellular-facing. Cystine bridges form between C32–C50, C34–C37, C44–C67, C82–C96, and C97–C102. N41 is a glycosylation site (N-linked (GlcNAc...) asparagine). The chain crosses the membrane as a helical span at residues 127-147 (AAVIAGPVCFVCIALMLMVYI). The Cytoplasmic segment spans residues 148 to 503 (CHNRTVIHHR…QLSQQEGIKM (356 aa)). S165 carries the post-translational modification Phosphoserine. One can recognise a GS domain in the interval 175–204 (TTLKDLIYDMTTSGSGSGLPLLVQRTIART). Phosphothreonine; by TGFBR2 is present on residues T185 and T186. Residues S187, S189, and S191 each carry the phosphoserine; by TGFBR2 modification. An FKBP1A-binding motif is present at residues 193–194 (LP). Residues 205–495 (IVLQESIGKG…LRIKKTLSQL (291 aa)) form the Protein kinase domain. Residues 211–219 (IGKGRFGEV) and K232 each bind ATP. A Glycyl lysine isopeptide (Lys-Gly) (interchain with G-Cter in ubiquitin) cross-link involves residue K268. D333 (proton acceptor) is an active-site residue. K391 participates in a covalent cross-link: Glycyl lysine isopeptide (Lys-Gly) (interchain with G-Cter in SUMO).

Belongs to the protein kinase superfamily. TKL Ser/Thr protein kinase family. TGFB receptor subfamily. Homodimer; in the endoplasmic reticulum but also at the cell membrane. Heterohexamer; TGFB1, TGFB2 and TGFB3 homodimeric ligands assemble a functional receptor composed of two TGFBR1 and TGFBR2 heterodimers to form a ligand-receptor heterohexamer. The respective affinity of TGBRB1 and TGFBR2 for the ligands may modulate the kinetics of assembly of the receptor and may explain the different biological activities of TGFB1, TGFB2 and TGFB3. Component of a complex composed of TSC22D1 (via N-terminus), TGFBR1 and TGFBR2; the interaction between TSC22D1 and TGFBR1 is inhibited by SMAD7 and promoted by TGFB1. Interacts with CD109; inhibits TGF-beta receptor activation in keratinocytes. Interacts with RBPMS. Interacts (unphosphorylated) with FKBP1A; prevents TGFBR1 phosphorylation by TGFBR2 and stabilizes it in the inactive conformation. Interacts with SMAD2, SMAD3 and ZFYVE9; ZFYVE9 recruits SMAD2 and SMAD3 to the TGF-beta receptor. Interacts with TRAF6 and MAP3K7; induces MAP3K7 activation by TRAF6. Interacts with PARD6A; involved in TGF-beta induced epithelial to mesenchymal transition. Interacts with NEDD4L. Interacts with SMAD7, SMURF1 and SMURF2; SMAD7 recruits NEDD4L, SMURF1 and SMURF2 to the TGF-beta receptor. Interacts with USP15 and VPS39. Interacts with SDCBP (via C-terminus). Interacts with CAV1 and this interaction is impaired in the presence of SDCBP. Interacts with APPL1; interaction is TGF beta dependent; mediates trafficking of the TGFBR1 from the endosomes to the nucleus via microtubules in a TRAF6-dependent manner. Interacts with GPR50; this interaction promotes the constitutive activation of SMAD signaling pathway. Requires Mg(2+) as cofactor. It depends on Mn(2+) as a cofactor. Post-translationally, phosphorylated at basal levels in the absence of ligand. Activated upon phosphorylation by TGFBR2, mainly in the GS domain. Phosphorylation in the GS domain abrogates FKBP1A-binding. In terms of processing, N-Glycosylated. Ubiquitinated; undergoes ubiquitination catalyzed by several E3 ubiquitin ligases including SMURF1, SMURF2 and NEDD4L2. Results in the proteasomal and/or lysosomal degradation of the receptor thereby negatively regulating its activity. Deubiquitinated by USP15, leading to stabilization of the protein and enhanced TGF-beta signal. Its ubiquitination and proteasome-mediated degradation is negatively regulated by SDCBP. Ubiquitinated by BFAR via'Lys-63'-linked ubiquitination at Lys-268, leading to TGF-beta signaling activation.

It localises to the cell membrane. It is found in the cell junction. Its subcellular location is the tight junction. The protein resides in the membrane raft. The protein localises to the cell surface. It catalyses the reaction L-threonyl-[receptor-protein] + ATP = O-phospho-L-threonyl-[receptor-protein] + ADP + H(+). It carries out the reaction L-seryl-[receptor-protein] + ATP = O-phospho-L-seryl-[receptor-protein] + ADP + H(+). Kept in an inactive conformation by FKBP1A preventing receptor activation in absence of ligand. CD109 is another inhibitor of the receptor. Its function is as follows. Transmembrane serine/threonine kinase forming with the TGF-beta type II serine/threonine kinase receptor, TGFBR2, the non-promiscuous receptor for the TGF-beta cytokines TGFB1, TGFB2 and TGFB3. Transduces the TGFB1, TGFB2 and TGFB3 signal from the cell surface to the cytoplasm and is thus regulating a plethora of physiological and pathological processes including cell cycle arrest in epithelial and hematopoietic cells, control of mesenchymal cell proliferation and differentiation, wound healing, extracellular matrix production, immunosuppression and carcinogenesis. The formation of the receptor complex composed of 2 TGFBR1 and 2 TGFBR2 molecules symmetrically bound to the cytokine dimer results in the phosphorylation and the activation of TGFBR1 by the constitutively active TGFBR2. Activated TGFBR1 phosphorylates SMAD2 which dissociates from the receptor and interacts with SMAD4. The SMAD2-SMAD4 complex is subsequently translocated to the nucleus where it modulates the transcription of the TGF-beta-regulated genes. This constitutes the canonical SMAD-dependent TGF-beta signaling cascade. Also involved in non-canonical, SMAD-independent TGF-beta signaling pathways. For instance, TGFBR1 induces TRAF6 autoubiquitination which in turn results in MAP3K7 ubiquitination and activation to trigger apoptosis. Also regulates epithelial to mesenchymal transition through a SMAD-independent signaling pathway through PARD6A phosphorylation and activation. This Mus musculus (Mouse) protein is TGF-beta receptor type-1 (Tgfbr1).